The primary structure comprises 296 residues: 4-hydroxy-tetrahydrodipicolinate synthase (296 aa).

Position 45 (Thr45) interacts with pyruvate. Tyr133 serves as the catalytic Proton donor/acceptor. The active-site Schiff-base intermediate with substrate is the Lys161. Ile203 contacts pyruvate.

It belongs to the DapA family. As to quaternary structure, homotetramer; dimer of dimers.

The protein resides in the cytoplasm. The catalysed reaction is L-aspartate 4-semialdehyde + pyruvate = (2S,4S)-4-hydroxy-2,3,4,5-tetrahydrodipicolinate + H2O + H(+). The protein operates within amino-acid biosynthesis; L-lysine biosynthesis via DAP pathway; (S)-tetrahydrodipicolinate from L-aspartate: step 3/4. In terms of biological role, catalyzes the condensation of (S)-aspartate-beta-semialdehyde [(S)-ASA] and pyruvate to 4-hydroxy-tetrahydrodipicolinate (HTPA). The chain is 4-hydroxy-tetrahydrodipicolinate synthase from Idiomarina loihiensis (strain ATCC BAA-735 / DSM 15497 / L2-TR).